The sequence spans 176 residues: uncharacterized protein (176 aa).

Positions 1–20 (MIKKISIILITLFIIQLTKS) are cleaved as a signal peptide. The interval 26 to 46 (NNNNNNNNNNNNNNNNNNNNN) is disordered. An N-linked (GlcNAc...) asparagine glycan is attached at N120.

This sequence belongs to the Dictyostelium gerABC family.

The protein resides in the secreted. This is an uncharacterized protein from Dictyostelium discoideum (Social amoeba).